The following is a 470-amino-acid chain: Uronate isomerase (470 aa).

Belongs to the metallo-dependent hydrolases superfamily. Uronate isomerase family.

The enzyme catalyses D-glucuronate = D-fructuronate. It catalyses the reaction aldehydo-D-galacturonate = keto-D-tagaturonate. The protein operates within carbohydrate metabolism; pentose and glucuronate interconversion. This Vibrio vulnificus (strain CMCP6) protein is Uronate isomerase.